The sequence spans 44 residues: Large ribosomal subunit protein bL34 (44 aa).

Belongs to the bacterial ribosomal protein bL34 family.

This chain is Large ribosomal subunit protein bL34, found in Variovorax paradoxus (strain S110).